Reading from the N-terminus, the 58-residue chain is UPF0391 membrane protein Sbal195_1447 (58 aa).

2 helical membrane passes run 6-26 and 28-48; these read LVFLVVAVIAGLLGFTGIAGA and AGIAKIIFFVFIVLLVISLLV.

It belongs to the UPF0391 family.

The protein localises to the cell membrane. This is UPF0391 membrane protein Sbal195_1447 from Shewanella baltica (strain OS195).